A 211-amino-acid polypeptide reads, in one-letter code: Urease accessory protein UreF (211 aa).

The tract at residues 68 to 93 is disordered; the sequence is LAPDGADRETDARTPSPAARDASRSQ.

Belongs to the UreF family. As to quaternary structure, ureD, UreF and UreG form a complex that acts as a GTP-hydrolysis-dependent molecular chaperone, activating the urease apoprotein by helping to assemble the nickel containing metallocenter of UreC. The UreE protein probably delivers the nickel.

The protein localises to the cytoplasm. Its function is as follows. Required for maturation of urease via the functional incorporation of the urease nickel metallocenter. This Mycobacterium marinum (strain ATCC BAA-535 / M) protein is Urease accessory protein UreF.